The primary structure comprises 395 residues: Xylose isomerase (395 aa).

Active-site residues include histidine 54 and aspartate 57. Positions 181, 217, 220, 245, 255, 257, and 293 each coordinate Mg(2+).

Belongs to the xylose isomerase family. As to quaternary structure, homotetramer. Requires Mg(2+) as cofactor.

Its subcellular location is the cytoplasm. The catalysed reaction is alpha-D-xylose = alpha-D-xylulofuranose. The sequence is that of Xylose isomerase (xylA) from Arthrobacter sp. (strain NRRL B3728).